A 912-amino-acid polypeptide reads, in one-letter code: WD repeat-containing protein 44 (912 aa).

Over residues 1–14 the composition is skewed to acidic residues; that stretch reads MASESDTEEFFDAP. The segment at 1-25 is disordered; the sequence is MASESDTEEFFDAPEDVHLEGGDPI. An N-acetylalanine modification is found at Ala-2. A binding activity region spans residues 2–170; the sequence is ASESDTEEFF…SSTAQLNVPE (169 aa). A Phosphoserine modification is found at Ser-3. Residues 9-15 carry the FFAT-like motif motif; the sequence is EFFDAPE. Residues Ser-50, Ser-66, Ser-71, Ser-81, Ser-96, and Ser-126 each carry the phosphoserine modification. Disordered stretches follow at residues 79–104 and 118–152; these read DDSL…GTEL and QEDS…KPVD. Polar residues predominate over residues 89 to 104; it reads QSDQATASPVTAGTEL. A Phosphothreonine modification is found at Thr-158. 5 disordered regions span residues 183–202, 207–279, 318–349, 396–422, and 457–479; these read VKES…TKDF, EVAP…PKEN, QENG…ELTD, SNDA…RLKQ, and RDEV…MPYT. Residues 210–256 form an important for interaction with ARHGAP26 AND ARHGAP10 region; the sequence is PAKPPRQLTPEPDIVASTKKPVPARPPPPANFPPPRPPPPSRPAPPP. Thr-218 carries the post-translational modification Phosphothreonine. Over residues 232 to 255 the composition is skewed to pro residues; sequence PARPPPPANFPPPRPPPPSRPAPP. Ser-261 carries the phosphoserine modification. The span at 261–277 shows a compositional bias: basic and acidic residues; that stretch reads SELEFEALKTPDLDVPK. Residue Thr-270 is modified to Phosphothreonine. An important for interaction with RAB11A region spans residues 333 to 346; the sequence is VMGPQRPRSNSGRE. An interaction with RAB11 region spans residues 334–504; it reads MGPQRPRSNS…DFDQIKVVQD (171 aa). Phosphoserine is present on residues Ser-341 and Ser-343. Phosphothreonine is present on Thr-348. Phosphoserine is present on residues Ser-402, Ser-469, Ser-470, and Ser-471. The segment covering 466–475 has biased composition (acidic residues); that stretch reads DDPSSSDDEG. Tyr-478 bears the Phosphotyrosine mark. A WD 1 repeat occupies 508 to 547; that stretch reads EHMGAVWTMKFSHCGRLLASAGQDNVVRIWALKNAFDYFN. The disordered stretch occupies residues 556–592; the sequence is EGRVSPSPSQESLNSSKSDTDTGVCSGTDEDPDDKNA. Phosphoserine occurs at positions 560 and 564. Over residues 560 to 572 the composition is skewed to low complexity; the sequence is SPSPSQESLNSSK. WD repeat units lie at residues 604-642, 644-684, 689-728, 739-778, 783-822, and 871-912; these read GHTA…CLCC, QHID…VALW, GQTK…YHTQ, KVGR…LSMK, VNSS…SKFT, and EDAE…KNLS.

As to quaternary structure, interacts with the GTP-bound form of RAB11A when membrane-associated. Interacts with GRAF1/ARHGAP26 or GRAF2/ARHGAP10; the interaction connects the endoplasmic reticulum (ER) with the endosomal tubule. Interacts (via FFAT-like motif) with VAPA (via MSP domain) or VAPB (via MSP domain); the interaction connects the ER with the endosomal tubule. Does not bind to other Rab and Rho small G proteins. In terms of processing, phosphorylated by ATK1; the phosphorylation stabilizes its interaction with RAB11A and RAB11B. Highly expressed in brain.

The protein localises to the cytoplasm. Its subcellular location is the cytosol. The protein resides in the perinuclear region. It localises to the endosome membrane. It is found in the golgi apparatus. The protein localises to the trans-Golgi network. Downstream effector for Rab11 which regulates Rab11 intracellular membrane trafficking functions such as endocytic recycling, intracellular ciliogenesis and protein export. ATK1-mediated phosphorylation of WDR44 induces binding to Rab11 which activates endocytic recycling of transferrin receptor back to the plasma membrane. When bound to Rab11, prevents the formation of the ciliogenic Rab11-Rabin8/RAB3IP-RAB11FIP3 complex, therefore inhibiting preciliary trafficking and ciliogenesis. Participates in neo-synthesized protein export by connecting the endoplasmic reticulum (ER) with the endosomal tubule via direct interactions with the integral ER proteins VAPA or VAPB and the endosomal protein GRAFs (GRAF1/ARHGAP26 or GRAF2/ARHGAP10), which facilitates the transfer of proteins such as E-cadherin, MPP14 and CFTR into a Rab8-Rab10-Rab11-dependent export route. The sequence is that of WD repeat-containing protein 44 (WDR44) from Bos taurus (Bovine).